A 100-amino-acid polypeptide reads, in one-letter code: Protein RnfH (100 aa).

Belongs to the UPF0125 (RnfH) family.

The sequence is that of Protein RnfH from Actinobacillus succinogenes (strain ATCC 55618 / DSM 22257 / CCUG 43843 / 130Z).